Reading from the N-terminus, the 306-residue chain is Putative syntaxin-131 (306 aa).

N-acetylmethionine is present on Met-1. The Cytoplasmic segment spans residues 1 to 276; that stretch reads MNDLLKGSLE…AVKSQKSSRK (276 aa). Positions 11–23 are enriched in basic and acidic residues; that stretch reads FSRDRSNRSDIES. Positions 11–35 are disordered; sequence FSRDRSNRSDIESGHGPGNSGDLGL. 2 coiled-coil regions span residues 35-72 and 134-162; these read LSGF…VTKA and KKKF…VERR. The 63-residue stretch at 205–267 folds into the t-SNARE coiled-coil homology domain; that stretch reads LAEIQERHDA…QSGNNQLTKA (63 aa). A helical; Anchor for type IV membrane protein transmembrane segment spans residues 277–297; sequence WMCIAILILLIIIIITVISVL. The Vesicular portion of the chain corresponds to 298–306; that stretch reads KPWTQKNGA.

It belongs to the syntaxin family. In terms of assembly, part of the t-SNARE complex.

It is found in the membrane. In terms of biological role, vesicle trafficking protein that functions in the secretory pathway. This is Putative syntaxin-131 (SYP131) from Arabidopsis thaliana (Mouse-ear cress).